Reading from the N-terminus, the 702-residue chain is MNHTHETIIAGRPMKVEFGKLGMLSDAAILMSYGDTVILTNVNASEKPREGIDFFPLSVEYEERLYSVGKIPGGFIKREGKPSEKAILNGRAIDRPLRPLFPKGYRNDVQVVCTVVSVENDNLPEILAINAASMALCLSSIPFTTPVAAVQVGLIGEEFILNPTSKEREESSLQLTVCATKERVMMIEAGGDEIPEDTMINAIKFGFDKCQDIIKFQEEAVSMFGKEKKVPELHKVPEEIEEAVREFAFDMISESMHITDRDERNAAMDEVKAKINEEFEEKYPDNMSDIGEAVYDMQKEVVRHMLLKEGKRPDGRAFDQVRNIGCEVGLLPRTHGTGLFTRGLTQVMTVATLGSISEIQILDGIGEEESKRYMHHYNFPAYSVGEVRPLRGPGRREIGHGALAERALEPLIPSEAEFPYTIRLVSEVLSSNGSTSQASVCGSTLALLDAGVPIKRPAAGIAMGLITSKDLTEEEVLTDIQGLEDFFGDMDFKVAGTEEGITSIQVDTKIKGLSEKVIHDAIYGARKARLMILDKIKECIPAPREEVSKYAPKTSTLQIDPEKIRDVIGAGGKVINKIIADTGVKIDIKEDGLVYVSSAESEGVKEAVKIIEGLTKEVKAGEIYLGKVTKIAQFGAFVEVLPNKEGLVHISKLDNKRVEKVEDVVSVGDEILVKVTEIDSQGRINLSRKDAIKEAEEENKQQ.

2 residues coordinate Mg(2+): Asp-485 and Asp-491. Positions 552-611 constitute a KH domain; sequence PKTSTLQIDPEKIRDVIGAGGKVINKIIADTGVKIDIKEDGLVYVSSAESEGVKEAVKII. The S1 motif domain maps to 621 to 689; it reads GEIYLGKVTK…SQGRINLSRK (69 aa).

Belongs to the polyribonucleotide nucleotidyltransferase family. Mg(2+) is required as a cofactor.

The protein resides in the cytoplasm. The catalysed reaction is RNA(n+1) + phosphate = RNA(n) + a ribonucleoside 5'-diphosphate. Functionally, involved in mRNA degradation. Catalyzes the phosphorolysis of single-stranded polyribonucleotides processively in the 3'- to 5'-direction. The protein is Polyribonucleotide nucleotidyltransferase of Clostridium perfringens (strain 13 / Type A).